Consider the following 39-residue polypeptide: Natriuretic peptide CnNP-b (39 aa).

Positions Ser1–Lys8 are excised as a propeptide. Cys12 and Cys28 are disulfide-bonded. Residues Ile20 to Ser39 are disordered.

The protein belongs to the natriuretic peptide family. In terms of tissue distribution, expressed by the venom gland.

The protein localises to the secreted. Functionally, snake venom natriuretic peptide that targets both NPR1 and NPR2. Exhibits hypotensive and vasodepressor activities. This Cryptophis nigrescens (Eastern small-eyed snake) protein is Natriuretic peptide CnNP-b.